Consider the following 473-residue polypeptide: Xylosidase/arabinosidase (473 aa).

Aspartate 18 acts as the Proton acceptor in catalysis. Glutamate 209 serves as the catalytic Proton donor.

This sequence belongs to the glycosyl hydrolase 43 family. In terms of assembly, homotetramer.

The catalysed reaction is Hydrolysis of (1-&gt;4)-beta-D-xylans, to remove successive D-xylose residues from the non-reducing termini.. It carries out the reaction Hydrolysis of terminal non-reducing alpha-L-arabinofuranoside residues in alpha-L-arabinosides.. The chain is Xylosidase/arabinosidase (xylA) from Thermoclostridium stercorarium (Clostridium stercorarium).